The following is a 155-amino-acid chain: Protein-export protein SecB (155 aa).

Belongs to the SecB family. As to quaternary structure, homotetramer, a dimer of dimers. One homotetramer interacts with 1 SecA dimer.

It is found in the cytoplasm. One of the proteins required for the normal export of preproteins out of the cell cytoplasm. It is a molecular chaperone that binds to a subset of precursor proteins, maintaining them in a translocation-competent state. It also specifically binds to its receptor SecA. This Albidiferax ferrireducens (strain ATCC BAA-621 / DSM 15236 / T118) (Rhodoferax ferrireducens) protein is Protein-export protein SecB.